The chain runs to 429 residues: MLSLDVLLLCAISGFQLLISADGDPMIEVFKWKQLDFYNRGDGYKDLWNRICIPDSHFYNSRKCLGSSSSGSFIQYNNVPQGVTHFRGRLFVTVPRRQPGIPSTLNYIDLAKDGWSQSPHLRAYPNLAVNQYNASEQNLVSVYRTSVDVCGRLWFVDTGMLEFPNNRQQIRHPSIWVIDLANDRLLKRFEIPQSIVEIGRGLASITIDVGARRCNDAYAYIPDLVNRRLHVYHLRSDRIWSFEHSFFNFDPLSDNLNIGGQTFRWDDGIFSATLGSYKPDGSRDVFFHPMASTNEFVVSNRVLQQEFNAARSDHGDDFHLLGTRGPSTQSTMHKYDPRTGVIFFAEVQKSGVGCWKTSKPFSTENHGSVYSNSSEMIYPSDLTIDEEGYIWVMSNSMPIFVYSKLDVEKYNFRIWRQSTLLAKRGTVCE.

The N-terminal stretch at 1–23 (MLSLDVLLLCAISGFQLLISADG) is a signal peptide. N-linked (GlcNAc...) asparagine glycosylation is found at N133 and N372.

This sequence belongs to the major royal jelly protein family.

Its subcellular location is the secreted. It carries out the reaction L-dopachrome = 5,6-dihydroxyindole-2-carboxylate. It participates in pigment biosynthesis; melanin biosynthesis. Tautomerization of L-dopachrome with decarboxylation to give 5,6-dihydroxyindole (DHI). Also catalyzes the tautomerization of the methyl ester of L-dopachrome and dopamine chrome. May play a role in melanization reactions during late pupal and adult stages. May play a role in melanization reactions during larval and early pupal stages. The protein is L-dopachrome tautomerase yellow-f of Drosophila melanogaster (Fruit fly).